We begin with the raw amino-acid sequence, 108 residues long: Phosphoribosyl-ATP pyrophosphatase (108 aa).

The protein belongs to the PRA-PH family.

Its subcellular location is the cytoplasm. It carries out the reaction 1-(5-phospho-beta-D-ribosyl)-ATP + H2O = 1-(5-phospho-beta-D-ribosyl)-5'-AMP + diphosphate + H(+). It functions in the pathway amino-acid biosynthesis; L-histidine biosynthesis; L-histidine from 5-phospho-alpha-D-ribose 1-diphosphate: step 2/9. The polypeptide is Phosphoribosyl-ATP pyrophosphatase (Pelobacter propionicus (strain DSM 2379 / NBRC 103807 / OttBd1)).